The sequence spans 62 residues: Short neurotoxin 1 (62 aa).

The disordered stretch occupies residues Leu1 to Gly20. Disulfide bonds link Cys3–Cys24, Cys17–Cys41, Cys43–Cys54, and Cys55–Cys60.

It belongs to the three-finger toxin family. Short-chain subfamily. Type I alpha-neurotoxin sub-subfamily. As to expression, expressed by the venom gland.

The protein resides in the secreted. Binds to muscle nicotinic acetylcholine receptor (nAChR) and inhibit acetylcholine from binding to the receptor, thereby impairing neuromuscular transmission. The protein is Short neurotoxin 1 of Naja mossambica (Mozambique spitting cobra).